A 151-amino-acid polypeptide reads, in one-letter code: SsrA-binding protein (151 aa).

Belongs to the SmpB family.

It localises to the cytoplasm. Its function is as follows. Required for rescue of stalled ribosomes mediated by trans-translation. Binds to transfer-messenger RNA (tmRNA), required for stable association of tmRNA with ribosomes. tmRNA and SmpB together mimic tRNA shape, replacing the anticodon stem-loop with SmpB. tmRNA is encoded by the ssrA gene; the 2 termini fold to resemble tRNA(Ala) and it encodes a 'tag peptide', a short internal open reading frame. During trans-translation Ala-aminoacylated tmRNA acts like a tRNA, entering the A-site of stalled ribosomes, displacing the stalled mRNA. The ribosome then switches to translate the ORF on the tmRNA; the nascent peptide is terminated with the 'tag peptide' encoded by the tmRNA and targeted for degradation. The ribosome is freed to recommence translation, which seems to be the essential function of trans-translation. In Campylobacter fetus subsp. fetus (strain 82-40), this protein is SsrA-binding protein.